The chain runs to 128 residues: NADPH-dependent 7-cyano-7-deazaguanine reductase (128 aa).

Residue Cys34 is the Thioimide intermediate of the active site. Asp41 serves as the catalytic Proton donor. Residues 56-58 and 75-76 each bind substrate; these read VEL and HE.

It belongs to the GTP cyclohydrolase I family. QueF type 1 subfamily.

It localises to the cytoplasm. The enzyme catalyses 7-aminomethyl-7-carbaguanine + 2 NADP(+) = 7-cyano-7-deazaguanine + 2 NADPH + 3 H(+). It participates in tRNA modification; tRNA-queuosine biosynthesis. Functionally, catalyzes the NADPH-dependent reduction of 7-cyano-7-deazaguanine (preQ0) to 7-aminomethyl-7-deazaguanine (preQ1). This Thermomicrobium roseum (strain ATCC 27502 / DSM 5159 / P-2) protein is NADPH-dependent 7-cyano-7-deazaguanine reductase.